Here is a 175-residue protein sequence, read N- to C-terminus: Thioredoxin M3, chloroplastic (175 aa).

The N-terminal 59 residues, methionine 1–serine 59, are a transit peptide targeting the chloroplast. Positions alanine 61–serine 171 constitute a Thioredoxin domain. Catalysis depends on nucleophile residues cysteine 95 and cysteine 98. Cysteine 95 and cysteine 98 are joined by a disulfide.

It belongs to the thioredoxin family. Plant M-type subfamily.

The protein resides in the plastid. The protein localises to the chloroplast. Its function is as follows. Probable thiol-disulfide oxidoreductase that may be involved in the redox regulation of chloroplastic enzymes. The polypeptide is Thioredoxin M3, chloroplastic (Oryza sativa subsp. japonica (Rice)).